Here is a 513-residue protein sequence, read N- to C-terminus: MEKLEGYSEKPKSRQQYFVYPLLFQEYIYAFAHDYGLNGSEPVEIFGCNNKKFSSLLVKRLIIRMYQQNFWINSVNHPNQDRLLDHSNYFYSDFYSQILSEGFAIVVEIPFSLGELFCPEEKQIPKFQNLQSIHSIFPFLEDKFLHLHYLSHIEIPYPIHLEILVQLLEYRIQDVPSLHLLRFFLNYYSNWNSLITSMKSIFLLKKENKRLFRFLYNSYVSEYEFFLLFLRKQSSCLRLTSSGTFLERIHFSRKMEHLGVMYPGFFRKTIWFFMDPLMHYVRYQGKAILASKGTLLLKKKWKSYLVNFSQYFFSFWIQPQRICLNQLTNSCFDFLGYLSSVPINTLLVRNQMLENSFLIDTRMKKFDTTVPAIPLIGSLSKAQFCTGSGHPISKPVWTDLSDSDILDRFGRICRNLFHYHSGSSKKRTLYRLKYILRLSCARTLARKHKSTVRTFMQRLGSVFLEEFFTEEEQVFSLMFTKTTHFSFHGSHSERIWYLDIIRINDLVNPLILN.

The protein belongs to the intron maturase 2 family. MatK subfamily.

It localises to the plastid. The protein resides in the chloroplast. Functionally, usually encoded in the trnK tRNA gene intron. Probably assists in splicing its own and other chloroplast group II introns. This chain is Maturase K, found in Arundo donax (Giant reed).